Here is a 232-residue protein sequence, read N- to C-terminus: Large ribosomal subunit protein uL1 (232 aa).

Belongs to the universal ribosomal protein uL1 family. Part of the 50S ribosomal subunit.

Functionally, binds directly to 23S rRNA. The L1 stalk is quite mobile in the ribosome, and is involved in E site tRNA release. Its function is as follows. Protein L1 is also a translational repressor protein, it controls the translation of the L11 operon by binding to its mRNA. The polypeptide is Large ribosomal subunit protein uL1 (Marinobacter nauticus (strain ATCC 700491 / DSM 11845 / VT8) (Marinobacter aquaeolei)).